Consider the following 1492-residue polypeptide: Neogenin (1492 aa).

An N-terminal signal peptide occupies residues 1–36; that stretch reads MAAEREAGRLLCTSSSRRCCPPPPLLLLLPLLLLLG. Residues 37–1136 lie on the Extracellular side of the membrane; sequence RPASGAAATK…PTSPLDSNML (1100 aa). Ig-like C2-type domains are found at residues 63 to 158, 163 to 249, 254 to 347, and 352 to 437; these read PFYF…AKLT, PRFT…AELK, PEEI…AELT, and PGFL…AQLI. N-linked (GlcNAc...) asparagine glycosylation occurs at Asn-84. 3 disulfide bridges follow: Cys-85/Cys-140, Cys-184/Cys-232, and Cys-281/Cys-331. Asn-221 is a glycosylation site (N-linked (GlcNAc...) asparagine). Asn-337 is a glycosylation site (N-linked (GlcNAc...) asparagine). An intrachain disulfide couples Cys-373 to Cys-421. Fibronectin type-III domains are found at residues 472–566, 572–662, 667–762, 772–862, 887–986, and 988–1085; these read APRD…TQPE, PAPN…TLSD, APQN…TFES, VPSS…RPHT, PPVG…LVPT, and PPKD…TPKA. Residues Asn-501 and Asn-520 are each glycosylated (N-linked (GlcNAc...) asparagine). 2 N-linked (GlcNAc...) asparagine glycosylation sites follow: Asn-670 and Asn-746. N-linked (GlcNAc...) asparagine glycosylation occurs at Asn-940. The disordered stretch occupies residues 1072–1128; sequence GPMSEAVQFRTPKADSSDKMPNDQALGSAGKGSRLPDLGSDYKPPMSGSNSPHGSPT. The span at 1083–1092 shows a compositional bias: basic and acidic residues; the sequence is PKADSSDKMP. Positions 1118–1128 are enriched in polar residues; it reads SGSNSPHGSPT. A helical membrane pass occupies residues 1137 to 1157; the sequence is LVIIVSVGVITIVVVVVIAVF. Over 1158–1492 the chain is Cytoplasmic; sequence CTRRTTSHQK…MKDLNAITTA (335 aa). Disordered stretches follow at residues 1205–1237, 1266–1300, and 1321–1396; these read PIDKSPDPNPVMTDTPIPRNSQDITPVDNSMDS, PKMMMPFDSQPPQPVISAHPIHSLDNPHHHFHSSS, and SMSL…FAVP. Phosphoserine occurs at positions 1209 and 1225. Residues 1222-1237 are compositionally biased toward polar residues; it reads PRNSQDITPVDNSMDS. Position 1229 is a phosphothreonine (Thr-1229). Composition is skewed to polar residues over residues 1321 to 1353 and 1361 to 1380; these read SMSLSDRANSTESVRNTPSTDTMPASSSQTCCT and ATSSSYLASSQEEDSGQSLP. Ser-1432 bears the Phosphoserine mark. Thr-1435 is subject to Phosphothreonine. Residues Ser-1463, Ser-1465, and Ser-1466 each carry the phosphoserine modification.

Belongs to the immunoglobulin superfamily. DCC family. As to quaternary structure, interacts with BMP2, BMP4, BMP6, and BMP7. Interacts with RGMA and RGMB. Interacts with MYO10. Widely expressed.

It is found in the cell membrane. In terms of biological role, multi-functional cell surface receptor regulating cell adhesion in many diverse developmental processes, including neural tube and mammary gland formation, myogenesis and angiogenesis. Receptor for members of the BMP, netrin, and repulsive guidance molecule (RGM) families. Netrin-Neogenin interactions result in a chemoattractive axon guidance response and cell-cell adhesion, the interaction between NEO1/Neogenin and RGMa and RGMb induces a chemorepulsive response. The chain is Neogenin from Mus musculus (Mouse).